The following is a 261-amino-acid chain: Ribonuclease HII (261 aa).

The RNase H type-2 domain occupies 71–259; it reads KYIAGVDEVG…VKEAKLHFDS (189 aa). A divalent metal cation contacts are provided by aspartate 77, glutamate 78, and aspartate 169.

It belongs to the RNase HII family. Mn(2+) serves as cofactor. It depends on Mg(2+) as a cofactor.

Its subcellular location is the cytoplasm. It carries out the reaction Endonucleolytic cleavage to 5'-phosphomonoester.. In terms of biological role, endonuclease that specifically degrades the RNA of RNA-DNA hybrids. This Listeria monocytogenes serotype 4b (strain F2365) protein is Ribonuclease HII.